Reading from the N-terminus, the 529-residue chain is Mannuronan C5-epimerase (529 aa).

The N-terminal stretch at 1–30 (MGACAMNPQALKGSAMLAAAMLLASGAAMA) is a signal peptide. PbH1 repeat units follow at residues 229–256 (GTET…SISQ), 291–313 (TTGF…DPHD), 315–338 (SHGL…IISR), 340–362 (VNDS…VLDR), 364–386 (SVNN…TLYE), and 387–409 (SGDN…RVRN). His-312 functions as the Proton acceptor in the catalytic mechanism.

The protein belongs to the D-mannuronate C5-epimerase family.

The protein localises to the periplasm. The enzyme catalyses [(1-&gt;4)-beta-D-mannuronosyl](n) = [alginate](n). It participates in glycan biosynthesis; alginate biosynthesis. In terms of biological role, catalyzes the epimerization of beta-D-mannuronate to alpha-L-guluronate during the synthesis of the linear polysaccharide alginate. In addition, is part of a periplasmic protein complex that protects alginate from degradation by AlgL by channeling the newly formed alginate polymer through a scaffold that transfers the alginate polymer through the periplasmic space to the outer membrane secretin AlgE. The protein is Mannuronan C5-epimerase of Pseudomonas fluorescens.